We begin with the raw amino-acid sequence, 115 residues long: Probable K(+)/H(+) antiporter subunit C (115 aa).

3 consecutive transmembrane segments (helical) span residues 4 to 21 (ILSA…YLLL), 28 to 47 (VIIG…FGMG), and 75 to 97 (ALVL…VLLA).

This sequence belongs to the CPA3 antiporters (TC 2.A.63) subunit C family. In terms of assembly, may form a hetero-oligomeric complex that consists of six subunits: PhaAB, PhaC, PhaD, PhaE, PhaF and PhaG.

The protein resides in the cell membrane. In terms of biological role, part of a K(+) efflux system which is required for the adaptation of R.meliloti to alkaline pH as well as for the infection process during symbiotic nodule development. This Rhizobium meliloti (strain 1021) (Ensifer meliloti) protein is Probable K(+)/H(+) antiporter subunit C (phaC).